The primary structure comprises 352 residues: C-C chemokine receptor type 5 (352 aa).

Topologically, residues 1-30 (MDYQVSSPTYDIDYYTSEPCQKINVKQIAA) are extracellular. Y3 bears the Sulfotyrosine mark. 2 O-linked (GalNAc...) serine glycosylation sites follow: S6 and S7. Residues Y10, Y14, and Y15 each carry the sulfotyrosine modification. Intrachain disulfides connect C20-C269 and C101-C178. A helical membrane pass occupies residues 31–58 (RLLPPLYSLVFIFGFVGNILVVLILINC). The Cytoplasmic segment spans residues 59-68 (KRLKSMTDIY). The chain crosses the membrane as a helical span at residues 69-89 (LLNLAISDLLFLLTVPFWAHY). Topologically, residues 90–102 (AAAQWDFGNTMCQ) are extracellular. Residues 103 to 124 (LLTGLYFIGFFSGIFFIILLTI) form a helical membrane-spanning segment. Residues 125-141 (DRYLAIVHAVFALKART) lie on the Cytoplasmic side of the membrane. Residues 142-166 (VTFGVVTSVITWVVAVFASLPGIIF) form a helical membrane-spanning segment. Over 167–198 (TRSQREGLHYTCSSHFPYSQYQFWKNFQTLKI) the chain is Extracellular. Residues 199 to 218 (VILGLVLPLLVMVICYSGIL) traverse the membrane as a helical segment. Residues 219-235 (KTLLRCRNEKKRHRAVR) are Cytoplasmic-facing. The chain crosses the membrane as a helical span at residues 236 to 260 (LIFTIMIVYFLFWAPYNIVLLLNTF). The Extracellular portion of the chain corresponds to 261–277 (QEFFGLNNCSSSNRLDQ). Residues 278–301 (AMQVTETLGMTHCCINPIIYAFVG) traverse the membrane as a helical segment. Residues 302–352 (EKFRNYLLVFFQKHIAKRFCKCCSIFQQEAPERASSVYTRSTGEQEISVGL) are Cytoplasmic-facing. S-palmitoyl cysteine attachment occurs at residues C321, C323, and C324. 4 positions are modified to phosphoserine; by BARK1: S336, S337, S342, and S349.

The protein belongs to the G-protein coupled receptor 1 family. In terms of assembly, interacts with PRAF2. Efficient ligand binding to CCL3/MIP-1alpha and CCL4/MIP-1beta requires sulfation, O-glycosylation and sialic acid modifications. Glycosylation on Ser-6 is required for efficient binding of CCL4. Interacts with GRK2. Interacts with ARRB1 and ARRB2. Interacts with CNIH4. Interacts with S100A4; this interaction stimulates T-lymphocyte chemotaxis. Post-translationally, sulfated on at least 2 of the N-terminal tyrosines. Sulfation is required for efficient binding of the chemokines, CCL3 and CCL4. In terms of processing, palmitoylation in the C-terminal is important for cell surface expression. Phosphorylation on serine residues in the C-terminal is stimulated by binding CC chemokines especially by APO-RANTES. Post-translationally, O-glycosylated, but not N-glycosylated. Ser-6 appears to be the major site even if Ser-7 may be also O-glycosylated. Also sialylated glycans present which contribute to chemokine binding. Thr-16 and Ser-17 may also be glycosylated and, if so, with small moieties such as a T-antigen.

The protein resides in the cell membrane. In terms of biological role, receptor for a number of inflammatory CC-chemokines including CCL3/MIP-1-alpha, CCL4/MIP-1-beta and RANTES and subsequently transduces a signal by increasing the intracellular calcium ion level. May play a role in the control of granulocytic lineage proliferation or differentiation. Participates in T-lymphocyte migration to the infection site by acting as a chemotactic receptor. This chain is C-C chemokine receptor type 5 (CCR5), found in Papio anubis (Olive baboon).